The following is a 395-amino-acid chain: S-adenosylmethionine synthase 3 (395 aa).

Glu-10 serves as a coordination point for Mg(2+). His-16 lines the ATP pocket. Glu-44 contributes to the K(+) binding site. Positions 57 and 100 each coordinate L-methionine. Residues 168 to 170 (DGK), 236 to 239 (SGRF), Asp-247, 253 to 254 (RK), Ala-270, Lys-274, and Lys-278 contribute to the ATP site. Asp-247 serves as a coordination point for L-methionine. Lys-278 is a binding site for L-methionine.

The protein belongs to the AdoMet synthase family. As to quaternary structure, homotetramer. Mn(2+) serves as cofactor. Mg(2+) is required as a cofactor. It depends on Co(2+) as a cofactor. Requires K(+) as cofactor.

The protein resides in the cytoplasm. It catalyses the reaction L-methionine + ATP + H2O = S-adenosyl-L-methionine + phosphate + diphosphate. The protein operates within amino-acid biosynthesis; S-adenosyl-L-methionine biosynthesis; S-adenosyl-L-methionine from L-methionine: step 1/1. Catalyzes the formation of S-adenosylmethionine from methionine and ATP. The reaction comprises two steps that are both catalyzed by the same enzyme: formation of S-adenosylmethionine (AdoMet) and triphosphate, and subsequent hydrolysis of the triphosphate. This is S-adenosylmethionine synthase 3 (METK3) from Populus trichocarpa (Western balsam poplar).